Reading from the N-terminus, the 537-residue chain is O-phosphoserine--tRNA(Cys) ligase (537 aa).

Residues 186-188 (HMT), 231-233 (SAS), 273-274 (YY), and Asn-317 each bind substrate.

This sequence belongs to the class-II aminoacyl-tRNA synthetase family. O-phosphoseryl-tRNA(Cys) synthetase subfamily. Homotetramer. Interacts with SepCysS.

It carries out the reaction tRNA(Cys) + O-phospho-L-serine + ATP = O-phospho-L-seryl-tRNA(Cys) + AMP + diphosphate. Functionally, catalyzes the attachment of O-phosphoserine (Sep) to tRNA(Cys). This Methanococcus maripaludis (strain C7 / ATCC BAA-1331) protein is O-phosphoserine--tRNA(Cys) ligase.